The chain runs to 209 residues: Elongation factor Ts, chloroplastic (209 aa).

It belongs to the EF-Ts family.

It localises to the plastid. The protein localises to the chloroplast. Functionally, associates with the EF-Tu.GDP complex and induces the exchange of GDP to GTP. It remains bound to the aminoacyl-tRNA.EF-Tu.GTP complex up to the GTP hydrolysis stage on the ribosome. In Cyanidioschyzon merolae (strain NIES-3377 / 10D) (Unicellular red alga), this protein is Elongation factor Ts, chloroplastic (tsf).